Here is a 255-residue protein sequence, read N- to C-terminus: uncharacterized protein (255 aa).

A signal peptide spans 1 to 23; that stretch reads MKRLNKLVLYISFLILVISFTAG. Residue Cys24 is the site of N-palmitoyl cysteine attachment. Cys24 carries S-diacylglycerol cysteine lipidation.

Belongs to the staphylococcal tandem lipoprotein family.

Its subcellular location is the cell membrane. This is an uncharacterized protein from Staphylococcus aureus (strain NCTC 8325 / PS 47).